We begin with the raw amino-acid sequence, 343 residues long: Probable magnesium transporter NIPA4 (343 aa).

The Extracellular portion of the chain corresponds to 1–18; it reads MAESSGSWRDSYKGMSSD. A helical transmembrane segment spans residues 19–39; that stretch reads NIKGLVLALSSSLFIGASFIV. Residues 40 to 66 lie on the Cytoplasmic side of the membrane; that stretch reads KKKGLKKAASTGTRAGVGGYSYLYEPL. Residues 67–87 traverse the membrane as a helical segment; it reads WWIGMTTMLLGEIANFAAYAF. Residues 88-90 lie on the Extracellular side of the membrane; that stretch reads APA. The helical transmembrane segment at 91 to 111 threads the bilayer; the sequence is ILVTPLGAVSIIISAVLAHII. The Cytoplasmic segment spans residues 112-115; it reads LREK. A helical membrane pass occupies residues 116 to 136; that stretch reads LHIFGILGCALCVVGSTTIVL. At 137–157 the chain is on the extracellular side; sequence HAPQEREIDSVIEVWNLATEP. The chain crosses the membrane as a helical span at residues 158 to 178; it reads AFMFYASLVIGAAVFLIIRFV. At 179–189 the chain is on the cytoplasmic side; the sequence is PQYGQTNVMVY. The helical transmembrane segment at 190 to 210 threads the bilayer; the sequence is IGICSLVGSLSVMSVKALGIA. Residues 211–220 lie on the Extracellular side of the membrane; it reads LKLTFSGTNQ. The helical transmembrane segment at 221–241 threads the bilayer; that stretch reads LFYPQTWIFTLVVLTCVVTQL. Residues 242 to 254 are Cytoplasmic-facing; that stretch reads NYLNKALDTFNTA. The helical transmembrane segment at 255–275 threads the bilayer; that stretch reads IVSPIYYVMFTSLTILASVIM. The Extracellular segment spans residues 276–283; it reads FKDWDRQN. The chain crosses the membrane as a helical span at residues 284–304; it reads GTQIVTEICGFVTILSGTFLL. The Cytoplasmic portion of the chain corresponds to 305 to 343; that stretch reads HRTKDMVEGSSVILPLRISKHINEEEGIPLRRQESLRSP.

Belongs to the NIPA (TC 2.A.7) family. In terms of assembly, homodimer.

It localises to the cell membrane. It is found in the early endosome. Functionally, acts as a Mg(2+) transporter. Can also transport other divalent cations such as Fe(2+), Sr(2+), Ba(2+), Mn(2+) and Co(2+) but to a much less extent than Mg(2+). The protein is Probable magnesium transporter NIPA4 of Arabidopsis thaliana (Mouse-ear cress).